The primary structure comprises 427 residues: Nucleolar and spindle-associated protein 1 (427 aa).

Positions 41–190 (AHLNPETRKE…LGNNKRTSAT (150 aa)) are disordered. Residues 43-55 (LNPETRKENKNQD) are compositionally biased toward basic and acidic residues. Residues 83 to 96 (TKTRRRRRKKHKTI) show a composition bias toward basic residues. Positions 119–128 (NFQNQENQEN) are enriched in low complexity. Ser-139 carries the post-translational modification Phosphoserine. The segment covering 159–179 (NDIKDSKKPLEKRSLCTDEFS) has biased composition (basic and acidic residues). Residues 181–190 (LGNNKRTSAT) show a composition bias toward polar residues. The residue at position 191 (Thr-191) is a Phosphothreonine. Residues 235–312 (IVTPVPPRGR…QAVFRTPKSK (78 aa)) are disordered. Residues 243 to 367 (GRLSVPCTPA…HKGKLKPWGQ (125 aa)) form an interaction with microtubules region. At Ser-246 the chain carries Phosphoserine. Phosphothreonine is present on Thr-250. The segment covering 252–264 (ARQQCPQGHSATK) has biased composition (polar residues). Ser-261 bears the Phosphoserine mark. Phosphothreonine occurs at positions 323 and 334. Phosphoserine is present on residues Ser-337 and Ser-348. A disordered region spans residues 354–427 (NYKPHKGKLK…RRNLGVTKAQ (74 aa)). The KEN box motif lies at 369-375 (KENNSLN). Residues 393 to 425 (LQTREERWKRQEQERKEKKEKLLEARRNLGVTK) adopt a coiled-coil conformation. Residues 394-419 (QTREERWKRQEQERKEKKEKLLEARR) are compositionally biased toward basic and acidic residues.

It belongs to the NUSAP family. Interacts with DNA and microtubules. Microtubule bundling is inhibited by IPO7, KPNA2 and KPNB1 while association with DNA is also inhibited by IPO7 and KPNA2. Ubiquitinated. Ubiquitination by FZR1 may lead to proteasome-dependent degradation of this protein.

It is found in the cytoplasm. It localises to the nucleus. The protein localises to the nucleolus. The protein resides in the cytoskeleton. Its subcellular location is the spindle. It is found in the chromosome. In terms of biological role, microtubule-associated protein with the capacity to bundle and stabilize microtubules. May associate with chromosomes and promote the organization of mitotic spindle microtubules around them. In Mus musculus (Mouse), this protein is Nucleolar and spindle-associated protein 1 (Nusap1).